A 427-amino-acid polypeptide reads, in one-letter code: Methylenetetrahydrofolate--tRNA-(uracil-5-)-methyltransferase TrmFO (427 aa).

8–13 provides a ligand contact to FAD; sequence GAGISG.

The protein belongs to the MnmG family. TrmFO subfamily. Requires FAD as cofactor.

Its subcellular location is the cytoplasm. The enzyme catalyses uridine(54) in tRNA + (6R)-5,10-methylene-5,6,7,8-tetrahydrofolate + NADH + H(+) = 5-methyluridine(54) in tRNA + (6S)-5,6,7,8-tetrahydrofolate + NAD(+). The catalysed reaction is uridine(54) in tRNA + (6R)-5,10-methylene-5,6,7,8-tetrahydrofolate + NADPH + H(+) = 5-methyluridine(54) in tRNA + (6S)-5,6,7,8-tetrahydrofolate + NADP(+). Catalyzes the folate-dependent formation of 5-methyl-uridine at position 54 (M-5-U54) in all tRNAs. This is Methylenetetrahydrofolate--tRNA-(uracil-5-)-methyltransferase TrmFO from Mycoplasmopsis agalactiae (strain NCTC 10123 / CIP 59.7 / PG2) (Mycoplasma agalactiae).